Here is a 157-residue protein sequence, read N- to C-terminus: SsrA-binding protein (157 aa).

Residues 136–151 (KRETSAKRDWSREKQR) show a composition bias toward basic and acidic residues. The segment at 136–157 (KRETSAKRDWSREKQRLLKQNS) is disordered.

The protein belongs to the SmpB family.

Its subcellular location is the cytoplasm. Functionally, required for rescue of stalled ribosomes mediated by trans-translation. Binds to transfer-messenger RNA (tmRNA), required for stable association of tmRNA with ribosomes. tmRNA and SmpB together mimic tRNA shape, replacing the anticodon stem-loop with SmpB. tmRNA is encoded by the ssrA gene; the 2 termini fold to resemble tRNA(Ala) and it encodes a 'tag peptide', a short internal open reading frame. During trans-translation Ala-aminoacylated tmRNA acts like a tRNA, entering the A-site of stalled ribosomes, displacing the stalled mRNA. The ribosome then switches to translate the ORF on the tmRNA; the nascent peptide is terminated with the 'tag peptide' encoded by the tmRNA and targeted for degradation. The ribosome is freed to recommence translation, which seems to be the essential function of trans-translation. This Cereibacter sphaeroides (strain ATCC 17029 / ATH 2.4.9) (Rhodobacter sphaeroides) protein is SsrA-binding protein.